The following is a 330-amino-acid chain: MWGLEVLLLLPMASFALYPEEILDTQWDLWKKTYRKQYNSKVDELSRRLIWEKNLKHISIHNLEASLGVHTYELAMNHLGDMTSEEVVQKMTGLKVPPSHSRSNDTLYIPDWESRAPDSVDYRKKGYVTPVKNQGQCGSCWAFSSVGALEGQLKKKTGKLLNLSPQNLVDCVSENDGCGGGYMTNAFQYVQKNRGIDSEDAYPYVGQDESCMYNPTGKAAKCRGYREIPEGNEKALKRAVARVGPISVAIDASLTSFQFYSKGVYYDENCNSDNLNHAVLAVGYGIQKGNKHWIIKNSWGENWGNKGYILMARNKNNACGIANLASFPKM.

The first 16 residues, 1-16 (MWGLEVLLLLPMASFA), serve as a signal peptide directing secretion. The propeptide at 17 to 115 (LYPEEILDTQ…TLYIPDWESR (99 aa)) is activation peptide. N-linked (GlcNAc...) asparagine glycosylation occurs at N104. 3 disulfide bridges follow: C137–C178, C171–C211, and C270–C319. C140 is a catalytic residue. Catalysis depends on residues H277 and N297.

Belongs to the peptidase C1 family.

The protein resides in the lysosome. The protein localises to the secreted. It localises to the apical cell membrane. It carries out the reaction Broad proteolytic activity. With small-molecule substrates and inhibitors, the major determinant of specificity is P2, which is preferably Leu, Met &gt; Phe, and not Arg.. Its function is as follows. Thiol protease involved in osteoclastic bone resorption and may participate partially in the disorder of bone remodeling. Displays potent endoprotease activity against fibrinogen at acid pH. May play an important role in extracellular matrix degradation. Involved in the release of thyroid hormone thyroxine (T4) by limited proteolysis of TG/thyroglobulin in the thyroid follicle lumen. The chain is Cathepsin K (CTSK) from Canis lupus familiaris (Dog).